We begin with the raw amino-acid sequence, 395 residues long: ATP phosphoribosyltransferase regulatory subunit (395 aa).

This sequence belongs to the class-II aminoacyl-tRNA synthetase family. HisZ subfamily. Heteromultimer composed of HisG and HisZ subunits.

It localises to the cytoplasm. The protein operates within amino-acid biosynthesis; L-histidine biosynthesis; L-histidine from 5-phospho-alpha-D-ribose 1-diphosphate: step 1/9. In terms of biological role, required for the first step of histidine biosynthesis. May allow the feedback regulation of ATP phosphoribosyltransferase activity by histidine. The sequence is that of ATP phosphoribosyltransferase regulatory subunit from Pseudomonas savastanoi pv. phaseolicola (strain 1448A / Race 6) (Pseudomonas syringae pv. phaseolicola (strain 1448A / Race 6)).